The primary structure comprises 386 residues: MQGPAVFIDAEIDDQAQELRKFFKSLGAEISEEKSSKGIEDDLHKIIGVCDVCFKDGTQHTLEEIDAVLNSVVSIIVSIPLERGENLILAFCEKMTRAPDSNLARVCLQSLWRLFSNLEPTSPLRYHVYYHLVQVAKRADQVKEVFSGVDQLKSQFSQCPPSNEQMQKLYRLLHDVLKDTNSELASKVMIELLGTYTAENASYAREDAMKCIVTALADPNTFLLDPLLSLKPVRFLEGELIHDLLSVFVSEKLPSYLQFYKNHKEFVNSQGLNHEQNIKKMRLLSFMQLAESNPEMTFQQLQDELQIGENEVEPFIIEVLKTKLVRARMDQKARKVHISSTMHRTFGRPQWQQLRDLLHAWKANLTLVQENMKSVSEAQIELAHKQ.

A PCI domain is found at 181-343 (NSELASKVMI…RKVHISSTMH (163 aa)).

This sequence belongs to the eIF-3 subunit M family. Component of the eukaryotic translation initiation factor 3 (eIF-3) complex.

The protein localises to the cytoplasm. In terms of biological role, component of the eukaryotic translation initiation factor 3 (eIF-3) complex, which is involved in protein synthesis of a specialized repertoire of mRNAs and, together with other initiation factors, stimulates binding of mRNA and methionyl-tRNAi to the 40S ribosome. The eIF-3 complex specifically targets and initiates translation of a subset of mRNAs involved in cell proliferation. The polypeptide is Eukaryotic translation initiation factor 3 subunit M (Aedes aegypti (Yellowfever mosquito)).